Consider the following 432-residue polypeptide: Gamma-glutamyl phosphate reductase (432 aa).

This sequence belongs to the gamma-glutamyl phosphate reductase family.

It is found in the cytoplasm. The catalysed reaction is L-glutamate 5-semialdehyde + phosphate + NADP(+) = L-glutamyl 5-phosphate + NADPH + H(+). It participates in amino-acid biosynthesis; L-proline biosynthesis; L-glutamate 5-semialdehyde from L-glutamate: step 2/2. Functionally, catalyzes the NADPH-dependent reduction of L-glutamate 5-phosphate into L-glutamate 5-semialdehyde and phosphate. The product spontaneously undergoes cyclization to form 1-pyrroline-5-carboxylate. The sequence is that of Gamma-glutamyl phosphate reductase from Methylorubrum populi (strain ATCC BAA-705 / NCIMB 13946 / BJ001) (Methylobacterium populi).